The following is a 697-amino-acid chain: Elongation factor G (697 aa).

Residues 8–290 enclose the tr-type G domain; the sequence is ERYRNFGIMA…AVVDYLPSPL (283 aa). GTP is bound by residues 17 to 24, 88 to 92, and 142 to 145; these read AHIDAGKT, DTPGH, and NKLD.

It belongs to the TRAFAC class translation factor GTPase superfamily. Classic translation factor GTPase family. EF-G/EF-2 subfamily.

It localises to the cytoplasm. Functionally, catalyzes the GTP-dependent ribosomal translocation step during translation elongation. During this step, the ribosome changes from the pre-translocational (PRE) to the post-translocational (POST) state as the newly formed A-site-bound peptidyl-tRNA and P-site-bound deacylated tRNA move to the P and E sites, respectively. Catalyzes the coordinated movement of the two tRNA molecules, the mRNA and conformational changes in the ribosome. The chain is Elongation factor G from Sphingopyxis alaskensis (strain DSM 13593 / LMG 18877 / RB2256) (Sphingomonas alaskensis).